The primary structure comprises 122 residues: Large ribosomal subunit protein uL14c (122 aa).

The protein belongs to the universal ribosomal protein uL14 family. Part of the 50S ribosomal subunit.

It is found in the plastid. It localises to the chloroplast. Binds to 23S rRNA. In Fagopyrum esculentum subsp. ancestrale (Wild buckwheat), this protein is Large ribosomal subunit protein uL14c.